A 325-amino-acid polypeptide reads, in one-letter code: Beta-ketoacyl-[acyl-carrier-protein] synthase III (325 aa).

Residues cysteine 112 and histidine 250 contribute to the active site. An ACP-binding region spans residues glutamine 251–arginine 255. Residue asparagine 280 is part of the active site.

Belongs to the thiolase-like superfamily. FabH family. As to quaternary structure, homodimer.

It is found in the cytoplasm. The catalysed reaction is malonyl-[ACP] + acetyl-CoA + H(+) = 3-oxobutanoyl-[ACP] + CO2 + CoA. It functions in the pathway lipid metabolism; fatty acid biosynthesis. Functionally, catalyzes the condensation reaction of fatty acid synthesis by the addition to an acyl acceptor of two carbons from malonyl-ACP. Catalyzes the first condensation reaction which initiates fatty acid synthesis and may therefore play a role in governing the total rate of fatty acid production. Possesses both acetoacetyl-ACP synthase and acetyl transacylase activities. Its substrate specificity determines the biosynthesis of branched-chain and/or straight-chain of fatty acids. The protein is Beta-ketoacyl-[acyl-carrier-protein] synthase III of Lactococcus lactis subsp. cremoris (strain SK11).